The primary structure comprises 523 residues: Putative UDP-glucuronosyltransferase ugt-50 (523 aa).

Positions 1-25 are cleaved as a signal peptide; it reads MHYSQMRWMFFCLTALLHGSFIVNA. 4 N-linked (GlcNAc...) asparagine glycosylation sites follow: N84, N248, N283, and N487. The helical transmembrane segment at 490 to 508 threads the bilayer; it reads IIEHNHLDLFFYLCIISLL.

This sequence belongs to the UDP-glycosyltransferase family.

The protein localises to the membrane. It carries out the reaction glucuronate acceptor + UDP-alpha-D-glucuronate = acceptor beta-D-glucuronoside + UDP + H(+). This is Putative UDP-glucuronosyltransferase ugt-50 (ugt-50) from Caenorhabditis elegans.